Here is a 410-residue protein sequence, read N- to C-terminus: G-protein coupled receptor family C group 5 member B (410 aa).

The signal sequence occupies residues 1 to 28 (MFLVLERKMRTHQVFPLPLLLVIASVAS). The Extracellular segment spans residues 29–56 (ENASTSRGCGLDLLPQYVSLCDLDAIWG). N-linked (GlcNAc...) asparagine glycosylation is present at Asn-30. The helical transmembrane segment at 57 to 77 (IVVEAVAGAGALITLLLMLIL) threads the bilayer. The Cytoplasmic segment spans residues 78–94 (LVRLPFIKDKERKRPVC). The helical transmembrane segment at 95-115 (LHFLFLLGTLGLFGLTFAFII) threads the bilayer. At 116–126 (QMDETICSIRR) the chain is on the extracellular side. The helical transmembrane segment at 127–147 (FLWGVLFALCFSCLLSQAWRV) threads the bilayer. The Cytoplasmic segment spans residues 148-164 (RRLVRQGTSPASWQLVS). Residues 165-185 (LALCLMLVQVIIATEWLVLTV) traverse the membrane as a helical segment. Residues 186–199 (LRDTKPACAYEPMD) are Extracellular-facing. The chain crosses the membrane as a helical span at residues 200–220 (FVMALIYDMVLLAITLAQSLF). The Cytoplasmic segment spans residues 221–234 (TLCGKFKRWKVNGA). A helical transmembrane segment spans residues 235-255 (FILVTTFLSALIWVVWMTMYL). At 256–271 (FGNSLIKQGDAWSDPT) the chain is on the extracellular side. Residues 272–292 (LAITLAASGWVFVIFHAIPEI) form a helical membrane-spanning segment. Topologically, residues 293–410 (HYTLLPPLQE…PPSHTGRHHW (118 aa)) are cytoplasmic. Ser-355 carries the post-translational modification Phosphoserine. The disordered stretch occupies residues 356–381 (LEQRSSSLGKKPSSLGNRPSAPFRSN). Over residues 360–371 (SSSLGKKPSSLG) the composition is skewed to low complexity.

The protein belongs to the G-protein coupled receptor 3 family.

The protein localises to the cell membrane. The protein resides in the cytoplasmic vesicle membrane. Functionally, G-protein coupled receptor involved in the regulation of cell volume. In Mus musculus (Mouse), this protein is G-protein coupled receptor family C group 5 member B (Gprc5b).